A 357-amino-acid chain; its full sequence is DNA replication and repair protein RecF (357 aa).

Residue 30-37 (GANGSGKT) coordinates ATP.

It belongs to the RecF family.

The protein resides in the cytoplasm. Its function is as follows. The RecF protein is involved in DNA metabolism; it is required for DNA replication and normal SOS inducibility. RecF binds preferentially to single-stranded, linear DNA. It also seems to bind ATP. In Cronobacter sakazakii (strain ATCC BAA-894) (Enterobacter sakazakii), this protein is DNA replication and repair protein RecF.